A 203-amino-acid chain; its full sequence is uncharacterized protein (203 aa).

This is an uncharacterized protein from Aquifex aeolicus (strain VF5).